The sequence spans 627 residues: Neuronal acetylcholine receptor subunit alpha-4 (627 aa).

An N-terminal signal peptide occupies residues 1-31 (MELGGPGAPPPPLLPPLLLLLGAGFLPASSP). The Extracellular segment spans residues 32-244 (VETRAHAEER…ITYAFVIRRL (213 aa)). Asn59 is a glycosylation site (N-linked (GlcNAc...) asparagine). Positions 78 and 80 each coordinate Ca(2+). N-linked (GlcNAc...) asparagine glycans are attached at residues Asn109 and Asn176. 2 disulfide bridges follow: Cys163-Cys177 and Cys227-Cys228. The helical transmembrane segment at 245-269 (PLFYTINLIVPCLLISCLTVLVFYL) threads the bilayer. Cys273 is lipidated: S-palmitoyl cysteine. Transmembrane regions (helical) follow at residues 277–295 (VTLC…LLIT) and 311–332 (YLLF…VLNV). The Cytoplasmic segment spans residues 333-600 (HHRSPRTHTM…WKYVAMVIDR (268 aa)). Residues 384–399 (PGFWPEPEGEPGVVSG) show a composition bias toward low complexity. Residues 384 to 463 (PGFWPEPEGE…PPPSTRAPGL (80 aa)) are disordered. Ser427 is subject to Phosphoserine. The span at 444–458 (SPCPLPDSCRPPPST) shows a compositional bias: pro residues. Ser541 carries the post-translational modification Phosphoserine. Residues 601–619 (IFLWVFVIVCLLGTAGLFL) traverse the membrane as a helical segment.

It belongs to the ligand-gated ion channel (TC 1.A.9) family. Acetylcholine receptor (TC 1.A.9.1) subfamily. Alpha-4/CHRNA4 sub-subfamily. As to quaternary structure, neuronal AChR is composed of two different types of subunits: alpha and beta. CHRNA4 forms heteropentameric neuronal acetylcholine receptors with CHRNB2 and CHRNB4, as well as CHRNA5 and CHRNB3 as accesory subunits. Found in two major stoichiometric forms, LS (low agonist sensitivity): (CHRNA4)3:(CHRNB2)2 and HS (high agonist sensitivity): (CHRNA4)2:(CHRNB2)3, the two stoichiometric forms differ in their unitary conductance, calcium permeability, ACh sensitivity and potentiation by divalent cation. Cells produce predominantly an (CHRNA4)3:(CHRNB2)2 nAChR. The (CHRNA4)2:(CHRNB2)3 expression is selectively up-regulated by nicotine and has lower single channel conductance and calcium permeability. In the striatum, also forms CHRNA4:CHRNA6:CHRNB2 complexes. Also found in the stoichiometric form: (CHRNA4:CHRNB2)2:CHRNB3. Interacts with RIC3; which is required for proper folding and assembly. Interacts with LYPD6.

It localises to the synaptic cell membrane. It is found in the cell membrane. It catalyses the reaction Ca(2+)(in) = Ca(2+)(out). The catalysed reaction is K(+)(in) = K(+)(out). The enzyme catalyses Na(+)(in) = Na(+)(out). With respect to regulation, activated by a myriad of ligands such as acetylcholine, cytisine, nicotine, choline and epibatidine. Channel potentiation by calcium is stoichiometry-selective, CHRNA4:CHRNB2 nACh receptor is achieved by calcium association with topographically distinct sites framed by anionic residues within the CHRNA4 subunit and between the CHRNA4 and CHRNB2 subunits. nAChR activity is inhibited by the antagonist alpha-conotoxins BuIA, PnIA, GID and MII, small disulfide-constrained peptides from cone snails. In terms of biological role, component of neuronal acetylcholine receptors (nAChRs) that function as pentameric, ligand-gated cation channels with high calcium permeability among other activities. nAChRs are excitatory neurotrasnmitter receptors formed by a collection of nAChR subunits known to mediate synaptic transmission in the nervous system and the neuromuscular junction. Each nAchR subunit confers differential attributes to channel properties, including activation, deactivation and desensitization kinetics, pH sensitivity, cation permeability, and binding to allosteric modulators. CHRNA4 forms heteropentameric neuronal acetylcholine receptors with CHRNB2 and CHRNB4, as well as CHRNA5 and CHRNB3 as accesory subunits. Is the most abundant nAChR subtype expressed in the central nervous system. Found in two major stoichiometric forms,(CHRNA4)3:(CHRNB2)2 and (CHRNA4)2:(CHRNB2)3, the two stoichiometric forms differ in their unitary conductance, calcium permeability, ACh sensitivity and potentiation by divalent cation. Involved in the modulation of calcium-dependent signaling pathways, influences the release of neurotransmitters, including dopamine, glutamate and GABA. The polypeptide is Neuronal acetylcholine receptor subunit alpha-4 (CHRNA4) (Mustela putorius furo (European domestic ferret)).